We begin with the raw amino-acid sequence, 461 residues long: E3 ubiquitin-protein ligase TRIM15 (461 aa).

An RING-type zinc finger spans residues 12 to 57; that stretch reads CSDCQGRLEDAVTAACGHTFCRLCLPLPPQMGAQPSSRVLLCPVCQ. Residues 74–115 form a B box-type zinc finger; the sequence is LGETYCEEHGEKIYFFCENDAEFLCVFCREGPSHQAHAVGFL. Positions 79, 82, 101, and 107 each coordinate Zn(2+). A coiled-coil region spans residues 123-230; sequence RDRLRGRLEA…EKCQQPASEL (108 aa). Residues 272–461 form the B30.2/SPRY domain; sequence EMLRAFSENL…KKGSCLTLKG (190 aa).

Belongs to the TRIM/RBCC family. Interacts with paxillin/PXN; this interaction recruits TRIM15 to focal adhesions. Interacts with TRIM8; this interaction prevents TRIM8 cytoplasmic translocation.

The protein resides in the cytoplasm. It is found in the nucleus. Its subcellular location is the cell junction. It localises to the focal adhesion. It catalyses the reaction S-ubiquitinyl-[E2 ubiquitin-conjugating enzyme]-L-cysteine + [acceptor protein]-L-lysine = [E2 ubiquitin-conjugating enzyme]-L-cysteine + N(6)-ubiquitinyl-[acceptor protein]-L-lysine.. E3 ubiquitin ligase that plays a role in several processes including innate antiviral immnity, cell migration and chemotaxis. Acts as a 'Lys-63'-specific ubiquitin ligase for MAPK1/ERK2 and MAPK3/ERK1, promoting their activation by facilitating their interaction with MAP2K1 and MAP2K2. Also plays a role in cell migration and chemotaxis by acting as a stable focal adhesion component upon recruitment by multi-adapter protein paxillin/PXN. Functions in the RIGI-mediated interferon induction pathway upstream or at the level of MAVS. Inhibits NF-kappa-B activation by turnover of 'Lys-63'-linked ubiquitination of MAP3K7/TAK1. Mechanistically, prevents TRIM8 cytoplasmic translocation and thus inhibits TRIM8-mediated 'Lys-63'-linked polyubiquitination of MAP3K7/TAK1 in the cytoplasm. Also has an important regulatory effect on the activation of hepatic stellate cells (HSCs). The protein is E3 ubiquitin-protein ligase TRIM15 (TRIM15) of Sus scrofa (Pig).